We begin with the raw amino-acid sequence, 193 residues long: Peptidyl-tRNA hydrolase (193 aa).

Y15 lines the tRNA pocket. Residue H20 is the Proton acceptor of the active site. Residues F65, N67, and N113 each coordinate tRNA.

It belongs to the PTH family. As to quaternary structure, monomer.

It is found in the cytoplasm. It carries out the reaction an N-acyl-L-alpha-aminoacyl-tRNA + H2O = an N-acyl-L-amino acid + a tRNA + H(+). In terms of biological role, hydrolyzes ribosome-free peptidyl-tRNAs (with 1 or more amino acids incorporated), which drop off the ribosome during protein synthesis, or as a result of ribosome stalling. Its function is as follows. Catalyzes the release of premature peptidyl moieties from peptidyl-tRNA molecules trapped in stalled 50S ribosomal subunits, and thus maintains levels of free tRNAs and 50S ribosomes. In Ehrlichia canis (strain Jake), this protein is Peptidyl-tRNA hydrolase.